Reading from the N-terminus, the 469-residue chain is MSAPRTLYDKIWDDHLVDEQPDGTCLLYIDRHLVHEVTSPQAFEGLRMTGRKVRAPEKTLAVVDHNVPTSPDRHLGIKNEESRIQVEALATNAAEFGVEYYSASDKRQGIVHIVGPEQGFTLPGMTIVCGDSHTSTHGAFGALAHGIGTSEVEHVLATQTLIQKKAKNMLVRVDGLLPPHVTAKDIILAIIGEIGTAGGTGHVIEFAGEAIRSLSMEGRMTICNMTIEGGARAGLIAPDEKTFEYIKGKPRAPKGEALEQAIAYWKTLQTDEGAHYDRVVVLDAASLPPIVSWGSSPEDVISVQGIVPNPDDIQDETKRTSKWRALDYMGLKPGTKMTDITLDRVFIGSCTNGRIEDLREVAKVVEGKTVASTVDAMIVPGSGLVKEQAEAEGLDKIFKAAGFDWREPGCSMCLAMNDDRLKPGERCASTSNRNFEGRQGFKGRTHLVSPAMAAAAAIAGHFVDIREWN.

3 residues coordinate [4Fe-4S] cluster: Cys350, Cys410, and Cys413.

It belongs to the aconitase/IPM isomerase family. LeuC type 1 subfamily. In terms of assembly, heterodimer of LeuC and LeuD. It depends on [4Fe-4S] cluster as a cofactor.

The enzyme catalyses (2R,3S)-3-isopropylmalate = (2S)-2-isopropylmalate. Its pathway is amino-acid biosynthesis; L-leucine biosynthesis; L-leucine from 3-methyl-2-oxobutanoate: step 2/4. Catalyzes the isomerization between 2-isopropylmalate and 3-isopropylmalate, via the formation of 2-isopropylmaleate. This is 3-isopropylmalate dehydratase large subunit from Rhizobium leguminosarum bv. trifolii (strain WSM2304).